Consider the following 255-residue polypeptide: Probable transcriptional regulatory protein PCC7424_2775 (255 aa).

It belongs to the TACO1 family.

It is found in the cytoplasm. The polypeptide is Probable transcriptional regulatory protein PCC7424_2775 (Gloeothece citriformis (strain PCC 7424) (Cyanothece sp. (strain PCC 7424))).